Reading from the N-terminus, the 420-residue chain is UDP-N-acetylglucosamine 1-carboxyvinyltransferase (420 aa).

Lysine 22 to asparagine 23 provides a ligand contact to phosphoenolpyruvate. Arginine 91 lines the UDP-N-acetyl-alpha-D-glucosamine pocket. Cysteine 115 serves as the catalytic Proton donor. The residue at position 115 (cysteine 115) is a 2-(S-cysteinyl)pyruvic acid O-phosphothioketal. UDP-N-acetyl-alpha-D-glucosamine contacts are provided by residues arginine 120 to leucine 124, lysine 160 to valine 163, aspartate 305, and isoleucine 327.

Belongs to the EPSP synthase family. MurA subfamily.

The protein resides in the cytoplasm. The enzyme catalyses phosphoenolpyruvate + UDP-N-acetyl-alpha-D-glucosamine = UDP-N-acetyl-3-O-(1-carboxyvinyl)-alpha-D-glucosamine + phosphate. Its pathway is cell wall biogenesis; peptidoglycan biosynthesis. Its function is as follows. Cell wall formation. Adds enolpyruvyl to UDP-N-acetylglucosamine. This Proteus mirabilis (strain HI4320) protein is UDP-N-acetylglucosamine 1-carboxyvinyltransferase.